Here is a 365-residue protein sequence, read N- to C-terminus: Protein mab-21-like (365 aa).

The protein belongs to the mab-21 family.

This chain is Protein mab-21-like, found in Aedes aegypti (Yellowfever mosquito).